The following is a 193-amino-acid chain: dITP/XTP pyrophosphatase (193 aa).

7–12 (SENENK) lines the substrate pocket. The active-site Proton acceptor is the Asp-65. Asp-65 contributes to the Mg(2+) binding site. Substrate is bound by residues Ser-66, 144 to 147 (FGYD), Lys-167, and 172 to 173 (HR).

It belongs to the HAM1 NTPase family. As to quaternary structure, homodimer. Requires Mg(2+) as cofactor.

The catalysed reaction is XTP + H2O = XMP + diphosphate + H(+). It catalyses the reaction dITP + H2O = dIMP + diphosphate + H(+). The enzyme catalyses ITP + H2O = IMP + diphosphate + H(+). Its function is as follows. Pyrophosphatase that catalyzes the hydrolysis of nucleoside triphosphates to their monophosphate derivatives, with a high preference for the non-canonical purine nucleotides XTP (xanthosine triphosphate), dITP (deoxyinosine triphosphate) and ITP. Seems to function as a house-cleaning enzyme that removes non-canonical purine nucleotides from the nucleotide pool, thus preventing their incorporation into DNA/RNA and avoiding chromosomal lesions. This Tropheryma whipplei (strain TW08/27) (Whipple's bacillus) protein is dITP/XTP pyrophosphatase.